The primary structure comprises 225 residues: Orotate phosphoribosyltransferase (225 aa).

K31 contacts 5-phospho-alpha-D-ribose 1-diphosphate. 39-40 (FF) serves as a coordination point for orotate. Residues 78–79 (YK), R105, K106, K109, H111, and 130–138 (DDVLTSGKA) each bind 5-phospho-alpha-D-ribose 1-diphosphate. Positions 134 and 163 each coordinate orotate.

This sequence belongs to the purine/pyrimidine phosphoribosyltransferase family. PyrE subfamily. As to quaternary structure, homodimer.

It carries out the reaction orotidine 5'-phosphate + diphosphate = orotate + 5-phospho-alpha-D-ribose 1-diphosphate. The protein operates within pyrimidine metabolism; UMP biosynthesis via de novo pathway; UMP from orotate: step 1/2. Catalyzes the transfer of a ribosyl phosphate group from 5-phosphoribose 1-diphosphate to orotate, leading to the formation of orotidine monophosphate (OMP). This Cryptococcus neoformans var. grubii serotype A (strain H99 / ATCC 208821 / CBS 10515 / FGSC 9487) (Filobasidiella neoformans var. grubii) protein is Orotate phosphoribosyltransferase (URA5).